We begin with the raw amino-acid sequence, 441 residues long: Keratin, type I cytoskeletal 17 (441 aa).

The disordered stretch occupies residues 1 to 23 (MTTTIRHFSSGSIKGSSGLAGGS). Residues 1–91 (MTTTIRHFSS…GGVDGLLVGG (91 aa)) are head. Residues 9-23 (SSGSIKGSSGLAGGS) show a composition bias toward low complexity. S12 is subject to Phosphoserine. K14 is covalently cross-linked (Glycyl lysine isopeptide (Lys-Gly) (interchain with G-Cter in SUMO1); alternate). A Glycyl lysine isopeptide (Lys-Gly) (interchain with G-Cter in SUMO2); alternate cross-link involves residue K14. A phosphoserine mark is found at S24, S30, S32, and S37. S42 bears the Phosphoserine; by RPS6KA1 mark. Residues 92–128 (EKATMQNLNDRLASYLDKVRALEEANTELELKIRDWY) form a coil 1A region. One can recognise an IF rod domain in the interval 92-403 (EKATMQNLND…RLLEGEDAHL (312 aa)). The residue at position 118 (T118) is a Phosphothreonine. Residues 129-146 (QKQAPGPAPDYSSYFKTI) are linker 1. The interval 147 to 238 (EDLRNKIHTA…NHEEEMKALR (92 aa)) is coil 1B. The tract at residues 239–258 (GQVGGEINVEMDAAPGVDLS) is linker 12. The tract at residues 259-400 (RILNEMRDQY…TYRRLLEGED (142 aa)) is coil 2. K286 participates in a covalent cross-link: Glycyl lysine isopeptide (Lys-Gly) (interchain with G-Cter in SUMO2). Position 287 is a phosphothreonine (T287). S331 carries the phosphoserine modification. The tail stretch occupies residues 401 to 441 (AHLTQYKTKEPVTTRQVRTIVEEVQDGRVISSREQVHQTSH). Residues K407 and K409 each participate in a glycyl lysine isopeptide (Lys-Gly) (interchain with G-Cter in SUMO1); alternate cross-link. Glycyl lysine isopeptide (Lys-Gly) (interchain with G-Cter in SUMO2); alternate cross-links involve residues K407 and K409.

This sequence belongs to the intermediate filament family. As to quaternary structure, heterodimer of a type I and a type II keratin. KRT17 associates with KRT6 isomers (KRT6A or KRT6B). Interacts with TRADD and SFN. Phosphorylation at Ser-42 occurs in a growth- and stress-dependent fashion in skin keratinocytes, it has no effect on filament organization.

The protein resides in the cytoplasm. Type I keratin involved in the formation and maintenance of various skin appendages, specifically in determining shape and orientation of hair. Required for the correct growth of hair follicles, in particular for the persistence of the anagen (growth) state. Modulates the function of TNF-alpha in the specific context of hair cycling. Regulates protein synthesis and epithelial cell growth through binding to the adapter protein SFN and by stimulating Akt/mTOR pathway. Involved in tissue repair. May be a marker of basal cell differentiation in complex epithelia and therefore indicative of a certain type of epithelial 'stem cells'. Acts as a promoter of epithelial proliferation by acting a regulator of immune response in skin: promotes Th1/Th17-dominated immune environment contributing to the development of basaloid skin tumors. May act as an autoantigen in the immunopathogenesis of psoriasis, with certain peptide regions being a major target for autoreactive T-cells and hence causing their proliferation. The sequence is that of Keratin, type I cytoskeletal 17 from Bos taurus (Bovine).